We begin with the raw amino-acid sequence, 442 residues long: ORC1-type DNA replication protein 8 (442 aa).

ATP contacts are provided by residues 66–70 and Tyr218; that span reads VGKTA.

This sequence belongs to the CDC6/cdc18 family.

In terms of biological role, involved in regulation of DNA replication. This is ORC1-type DNA replication protein 8 (cdc6h) from Haloarcula marismortui (strain ATCC 43049 / DSM 3752 / JCM 8966 / VKM B-1809) (Halobacterium marismortui).